Consider the following 96-residue polypeptide: ESAT-6-like protein SAG1039 (96 aa).

It belongs to the WXG100 family. sagEsxA-like subfamily. As to quaternary structure, homodimer.

This chain is ESAT-6-like protein SAG1039, found in Streptococcus agalactiae serotype V (strain ATCC BAA-611 / 2603 V/R).